We begin with the raw amino-acid sequence, 54 residues long: ATP synthase protein 8 (54 aa).

Residues 9–25 form a helical membrane-spanning segment; it reads WVFLFFLVWLVLGFLGL.

This sequence belongs to the ATPase protein 8 family. As to quaternary structure, F-type ATPases have 2 components, CF(1) - the catalytic core - and CF(0) - the membrane proton channel.

It localises to the mitochondrion membrane. Functionally, mitochondrial membrane ATP synthase (F(1)F(0) ATP synthase or Complex V) produces ATP from ADP in the presence of a proton gradient across the membrane which is generated by electron transport complexes of the respiratory chain. F-type ATPases consist of two structural domains, F(1) - containing the extramembraneous catalytic core and F(0) - containing the membrane proton channel, linked together by a central stalk and a peripheral stalk. During catalysis, ATP synthesis in the catalytic domain of F(1) is coupled via a rotary mechanism of the central stalk subunits to proton translocation. Part of the complex F(0) domain. Minor subunit located with subunit a in the membrane. This chain is ATP synthase protein 8 (MTATP8), found in Branchiostoma floridae (Florida lancelet).